Reading from the N-terminus, the 445-residue chain is Pre-B-cell leukemia transcription factor 2 (445 aa).

Residues 13–44 form a disordered region; that stretch reads VGIPGLPIHGGPQTLTPHPMHEPPTDNGEPRK. A compositionally biased stretch (basic and acidic residues) spans 31–44; it reads PMHEPPTDNGEPRK. The region spanning 42–236 is the PBC domain; that stretch reads PRKQDIGDIL…VMILRSRFLD (195 aa). Residues 49–128 form a PBC-A region; it reads DILQQIMTIT…EGVAGPEKGG (80 aa). The interval 131–236 is PBC-B; it reads AAAAAAAAAS…VMILRSRFLD (106 aa). The homeobox; TALE-type DNA-binding region spans 237–299; that stretch reads ARRKRRNFSK…NKRIRYKKNI (63 aa). A compositionally biased stretch (polar residues) spans 319-332; that stretch reads QGGHSGANSPTTPT. A disordered region spans residues 319 to 338; sequence QGGHSGANSPTTPTSAGSGG.

The protein belongs to the TALE/PBX homeobox family.

It is found in the nucleus. Functionally, transcriptional activator that binds the sequence 5'-ATCAATCAA-3'. In Xenopus laevis (African clawed frog), this protein is Pre-B-cell leukemia transcription factor 2 (pbx2).